The sequence spans 204 residues: VQ motif-containing protein 13 (204 aa).

Basic and acidic residues predominate over residues 1–12; it reads MEKSPRYRDKAK. The segment at 1–26 is disordered; sequence MEKSPRYRDKAKNLLPSPSSCTTTPT. The span at 16 to 26 shows a compositional bias: low complexity; that stretch reads PSPSSCTTTPT. A Phosphoserine modification is found at Ser17. The VQ motif lies at 46-55; that stretch reads FKQVVQLLTG. Residues 56–90 form a disordered region; the sequence is IPKNPTHQPDPRFPPFHSIPPIKAVTNKKQSSSFR. Phosphoserine is present on residues Ser73 and Ser128. Thr131 carries the post-translational modification Phosphothreonine. Residues 133–204 are disordered; the sequence is LMSDPFYRPG…HSPAPSPHDH (72 aa). Positions 143–152 are enriched in low complexity; that stretch reads SFSQSPSDSK. 2 positions are modified to phosphoserine: Ser147 and Ser173. Phosphothreonine occurs at positions 177 and 192. Residues Ser196 and Ser200 each carry the phosphoserine modification.

In terms of processing, phosphorylated on serine and threonine residues by MPK6.

Its subcellular location is the nucleus. Functionally, may modulate WRKY transcription factor activities. The chain is VQ motif-containing protein 13 from Arabidopsis thaliana (Mouse-ear cress).